Consider the following 246-residue polypeptide: E3 ubiquitin-protein ligase MARCHF2 (246 aa).

The segment at glycine 56–glutamate 116 adopts an RING-CH-type zinc-finger fold. Zn(2+)-binding residues include cysteine 64, cysteine 67, cysteine 80, cysteine 82, histidine 90, cysteine 93, cysteine 106, and cysteine 109. A run of 2 helical transmembrane segments spans residues leucine 138 to leucine 158 and alanine 175 to valine 195.

The protein localises to the endoplasmic reticulum membrane. The protein resides in the lysosome membrane. Its subcellular location is the endosome membrane. The enzyme catalyses S-ubiquitinyl-[E2 ubiquitin-conjugating enzyme]-L-cysteine + [acceptor protein]-L-lysine = [E2 ubiquitin-conjugating enzyme]-L-cysteine + N(6)-ubiquitinyl-[acceptor protein]-L-lysine.. Its pathway is protein modification; protein ubiquitination. Its function is as follows. E3 ubiquitin-protein ligase which may be involved in endosomal trafficking. E3 ubiquitin ligases accept ubiquitin from an E2 ubiquitin-conjugating enzyme in the form of a thioester and then directly transfer the ubiquitin to targeted substrates. This is E3 ubiquitin-protein ligase MARCHF2 (marchf2) from Xenopus tropicalis (Western clawed frog).